Here is a 953-residue protein sequence, read N- to C-terminus: Xylosyltransferase 1 (953 aa).

Topologically, residues 1–17 are cytoplasmic; sequence MVAAPCARRLARRSHSA. A helical; Signal-anchor for type II membrane protein transmembrane segment spans residues 18–38; sequence LLAALMVLLLHTLVVWNFSSL. Topologically, residues 39 to 953 are lumenal; sequence DSGAGEQRRA…GAVKPDGRLR (915 aa). The segment covering 48-62 has biased composition (low complexity); sequence AGAAAGAAEQQQPAA. Disordered regions lie at residues 48-67 and 74-251; these read AGAA…RRER and LPAA…APKC. Positions 79–97 are enriched in gly residues; the sequence is GGPGGRAGGGGARGGGPGG. Over residues 138 to 154 the composition is skewed to basic and acidic residues; the sequence is KVRTDSNNENSVPKDFE. Positions 156 to 165 are enriched in polar residues; the sequence is VDNSNFAPRT. Composition is skewed to basic and acidic residues over residues 170-197 and 205-216; these read HQPE…DKRQ and GPKEVLPPREKA. N-linked (GlcNAc...) asparagine glycosylation is present at asparagine 219. 4 disulfide bridges follow: cysteine 251-cysteine 279, cysteine 295-cysteine 536, cysteine 555-cysteine 568, and cysteine 557-cysteine 566. Residues valine 327, aspartate 355, and 384–386 contribute to the UDP-alpha-D-xylose site; that span reads TIW. Asparagine 415 carries N-linked (GlcNAc...) asparagine glycosylation. 488-489 contacts UDP-alpha-D-xylose; sequence DW. UDP-alpha-D-xylose contacts are provided by residues serine 569 and 592-593; that span reads RK. 2 disulfides stabilise this stretch: cysteine 669-cysteine 921 and cysteine 914-cysteine 927. The N-linked (GlcNAc...) asparagine glycan is linked to asparagine 771. The disordered stretch occupies residues 933-953; sequence SSFSPDPKSELGAVKPDGRLR.

The protein belongs to the glycosyltransferase 14 family. XylT subfamily. Monomer. A divalent metal cation is required as a cofactor. In terms of processing, contains 7 disulfide bonds. Post-translationally, N-glycosylated. In terms of tissue distribution, detected in brain, spleen, kidney and testis, and at low levels in skeletal muscle.

Its subcellular location is the golgi apparatus membrane. It carries out the reaction UDP-alpha-D-xylose + L-seryl-[protein] = 3-O-(beta-D-xylosyl)-L-seryl-[protein] + UDP + H(+). Its pathway is glycan metabolism; chondroitin sulfate biosynthesis. The protein operates within glycan metabolism; heparan sulfate biosynthesis. Functionally, catalyzes the first step in the biosynthesis of chondroitin sulfate and dermatan sulfate proteoglycans, such as DCN. Transfers D-xylose from UDP-D-xylose to specific serine residues of the core protein. Required for normal maturation of chondrocytes during bone development, normal onset of ossification and normal embryonic and postnatal skeleton development, especially of the long bones. The chain is Xylosyltransferase 1 (Xylt1) from Mus musculus (Mouse).